A 247-amino-acid polypeptide reads, in one-letter code: Type III pantothenate kinase (247 aa).

6–13 contacts ATP; that stretch reads DVGNTHTT. 101 to 104 is a binding site for substrate; sequence GADR. The active-site Proton acceptor is aspartate 103. K(+) is bound at residue aspartate 123. Threonine 126 is a binding site for ATP. Residue threonine 177 coordinates substrate.

It belongs to the type III pantothenate kinase family. As to quaternary structure, homodimer. NH4(+) is required as a cofactor. It depends on K(+) as a cofactor.

Its subcellular location is the cytoplasm. The enzyme catalyses (R)-pantothenate + ATP = (R)-4'-phosphopantothenate + ADP + H(+). Its pathway is cofactor biosynthesis; coenzyme A biosynthesis; CoA from (R)-pantothenate: step 1/5. Its function is as follows. Catalyzes the phosphorylation of pantothenate (Pan), the first step in CoA biosynthesis. The polypeptide is Type III pantothenate kinase (Thermosipho melanesiensis (strain DSM 12029 / CIP 104789 / BI429)).